Consider the following 226-residue polypeptide: ATP synthase subunit C lysine N-methyltransferase (226 aa).

A helical membrane pass occupies residues 35–55 (VIGGTLVALYAVATPFVAPAL). The tract at residues 48-82 (TPFVAPALRKLCLPYVPATTTQVKNVLKMLRSRTG) is required for mitochondrial location.

Belongs to the ANT/ATPSC lysine N-methyltransferase family.

The protein localises to the mitochondrion membrane. Its function is as follows. Mitochondrial protein-lysine N-methyltransferase that promotes chronic pain. Involved in persistent inflammatory and neuropathic pain: methyltransferase activity in the mitochondria of sensory neurons promotes chronic pain via a pathway that depends on the production of reactive oxygen species (ROS) and on the engagement of spinal cord microglia. Protein-lysine N-methyltransferase activity is dependent on S-adenosyl-L-methionine. This Xenopus laevis (African clawed frog) protein is ATP synthase subunit C lysine N-methyltransferase (atpsckmt).